A 309-amino-acid chain; its full sequence is 2-phospho-L-lactate transferase (309 aa).

Residues Asp50 and Lys89 each coordinate 7,8-didemethyl-8-hydroxy-5-deazariboflavin.

The protein belongs to the CofD family. As to quaternary structure, homodimer. The cofactor is Mg(2+).

It catalyses the reaction (2S)-lactyl-2-diphospho-5'-guanosine + 7,8-didemethyl-8-hydroxy-5-deazariboflavin = oxidized coenzyme F420-0 + GMP + H(+). The protein operates within cofactor biosynthesis; coenzyme F420 biosynthesis. In terms of biological role, catalyzes the transfer of the 2-phospholactate moiety from (2S)-lactyl-2-diphospho-5'-guanosine to 7,8-didemethyl-8-hydroxy-5-deazariboflavin (FO) with the formation of oxidized coenzyme F420-0 and GMP. In Methanococcus maripaludis (strain C6 / ATCC BAA-1332), this protein is 2-phospho-L-lactate transferase.